The primary structure comprises 414 residues: tRNA methyltransferase 10 homolog C (414 aa).

A mitochondrion-targeting transit peptide spans 1–35 (MNVTVRFLRPFARCLVPYTFHRKRSHLYSGVLQRY). Ser79 is modified (phosphoserine). Residues 133–171 (GKEKAKKAKQVKKEMKAEAREEAKRARLLETTAEEQQQD) adopt a coiled-coil conformation. The SAM-dependent MTase TRM10-type domain maps to 186–378 (LGWKGVQAMQ…KFVPRRKHTG (193 aa)).

This sequence belongs to the class IV-like SAM-binding methyltransferase superfamily. TRM10 family. In terms of assembly, component of mitochondrial ribonuclease P, a complex composed of TRMT10C/MRPP1, HSD17B10/MRPP2 and PRORP/MRPP3. Interacts with HSD17B10/MRPP2; forming the MRPP1-MRPP2 subcomplex of the mitochondrial ribonuclease P complex. Interacts with GRSF1.

It localises to the mitochondrion matrix. The protein localises to the mitochondrion nucleoid. It catalyses the reaction adenosine(9) in tRNA + S-adenosyl-L-methionine = N(1)-methyladenosine(9) in tRNA + S-adenosyl-L-homocysteine + H(+). The enzyme catalyses guanosine(9) in tRNA + S-adenosyl-L-methionine = N(1)-methylguanosine(9) in tRNA + S-adenosyl-L-homocysteine + H(+). The catalysed reaction is an adenosine in mRNA + S-adenosyl-L-methionine = an N(1)-methyladenosine in mRNA + S-adenosyl-L-homocysteine + H(+). In terms of biological role, mitochondrial tRNA N(1)-methyltransferase involved in mitochondrial tRNA maturation. Component of mitochondrial ribonuclease P, a complex composed of TRMT10C/MRPP1, HSD17B10/MRPP2 and PRORP/MRPP3, which cleaves tRNA molecules in their 5'-ends. Together with HSD17B10/MRPP2, forms a subcomplex of the mitochondrial ribonuclease P, named MRPP1-MRPP2 subcomplex, which displays functions that are independent of the ribonuclease P activity. The MRPP1-MRPP2 subcomplex catalyzes the formation of N(1)-methylguanine and N(1)-methyladenine at position 9 (m1G9 and m1A9, respectively) in tRNAs; TRMT10C/MRPP1 acting as the catalytic N(1)-methyltransferase subunit. The MRPP1-MRPP2 subcomplex also acts as a tRNA maturation platform: following 5'-end cleavage by the mitochondrial ribonuclease P complex, the MRPP1-MRPP2 subcomplex enhances the efficiency of 3'-processing catalyzed by ELAC2, retains the tRNA product after ELAC2 processing and presents the nascent tRNA to the mitochondrial CCA tRNA nucleotidyltransferase TRNT1 enzyme. In addition to tRNA N(1)-methyltransferase activity, TRMT10C/MRPP1 also acts as a mRNA N(1)-methyltransferase by mediating methylation of adenosine residues at the N(1) position of MT-ND5 mRNA. Associates with mitochondrial DNA complexes at the nucleoids to initiate RNA processing and ribosome assembly. The chain is tRNA methyltransferase 10 homolog C from Mus musculus (Mouse).